Here is a 189-residue protein sequence, read N- to C-terminus: H/ACA ribonucleoprotein complex subunit 1-like protein 2 (189 aa).

A compositionally biased stretch (gly residues) spans 1–12 (MRPPRGGGSFRG). 2 disordered regions span residues 1–39 (MRPP…NYDE) and 129–189 (RFLP…RGRA). Residues 162–177 (GRGAPRGASRGFQPRG) are compositionally biased toward low complexity.

Belongs to the GAR1 family. In terms of assembly, component of the small nucleolar ribonucleoprotein particle containing H/ACA-type snoRNAs (H/ACA snoRNPs).

It is found in the nucleus. The protein localises to the nucleolus. In terms of biological role, required for ribosome biogenesis. Part of a complex which catalyzes pseudouridylation of rRNA. This involves the isomerization of uridine such that the ribose is subsequently attached to C5, instead of the normal N1. Pseudouridine ('psi') residues may serve to stabilize the conformation of rRNAs. The polypeptide is H/ACA ribonucleoprotein complex subunit 1-like protein 2 (Arabidopsis thaliana (Mouse-ear cress)).